A 246-amino-acid polypeptide reads, in one-letter code: Ribonuclease PH (246 aa).

The segment at 67-87 is disordered; it reads NMLPGSTSPRKRRDRSGKVDG. Phosphate is bound by residues arginine 88 and 126 to 128; that span reads GTR.

This sequence belongs to the RNase PH family. Homohexameric ring arranged as a trimer of dimers.

It catalyses the reaction tRNA(n+1) + phosphate = tRNA(n) + a ribonucleoside 5'-diphosphate. Phosphorolytic 3'-5' exoribonuclease that plays an important role in tRNA 3'-end maturation. Removes nucleotide residues following the 3'-CCA terminus of tRNAs; can also add nucleotides to the ends of RNA molecules by using nucleoside diphosphates as substrates, but this may not be physiologically important. Probably plays a role in initiation of 16S rRNA degradation (leading to ribosome degradation) during starvation. This is Ribonuclease PH from Rhodopirellula baltica (strain DSM 10527 / NCIMB 13988 / SH1).